We begin with the raw amino-acid sequence, 243 residues long: Proteasome subunit beta (243 aa).

The interval 1–46 (MFNPNNGSEFARNRARLDDTPNPYEPEVGSLPEGDRSQAGSDTVNK) is disordered. Residues 1–48 (MFNPNNGSEFARNRARLDDTPNPYEPEVGSLPEGDRSQAGSDTVNKTG) constitute a propeptide, removed in mature form; by autocatalysis. The active-site Nucleophile is the Thr49.

This sequence belongs to the peptidase T1B family. The 20S proteasome core is composed of 14 alpha and 14 beta subunits that assemble into four stacked heptameric rings, resulting in a barrel-shaped structure. The two inner rings, each composed of seven catalytic beta subunits, are sandwiched by two outer rings, each composed of seven alpha subunits. The catalytic chamber with the active sites is on the inside of the barrel. Has a gated structure, the ends of the cylinder being occluded by the N-termini of the alpha-subunits. Is capped at one or both ends by the proteasome regulatory ATPase, PAN.

It is found in the cytoplasm. The enzyme catalyses Cleavage of peptide bonds with very broad specificity.. Its activity is regulated as follows. The formation of the proteasomal ATPase PAN-20S proteasome complex, via the docking of the C-termini of PAN into the intersubunit pockets in the alpha-rings, triggers opening of the gate for substrate entry. Interconversion between the open-gate and close-gate conformations leads to a dynamic regulation of the 20S proteasome proteolysis activity. In terms of biological role, component of the proteasome core, a large protease complex with broad specificity involved in protein degradation. This Halobacterium salinarum (strain ATCC 29341 / DSM 671 / R1) protein is Proteasome subunit beta.